We begin with the raw amino-acid sequence, 91 residues long: Class I hydrophobin E (91 aa).

A signal peptide spans 1-16 (MKFSIAAIALAAVAVA). Cystine bridges form between Cys30-Cys72, Cys42-Cys64, Cys43-Cys55, and Cys73-Cys89. Residue Asn83 is glycosylated (N-linked (GlcNAc...) asparagine).

This sequence belongs to the fungal hydrophobin family.

The protein localises to the secreted. It is found in the cell wall. Its subcellular location is the vacuole. The protein resides in the cytoplasmic vesicle. In terms of biological role, aerial growth, conidiation, and dispersal of filamentous fungi in the environment rely upon a capability of their secreting small amphipathic proteins called hydrophobins (HPBs) with low sequence identity. Class I can self-assemble into an outermost layer of rodlet bundles on aerial cell surfaces, conferring cellular hydrophobicity that supports fungal growth, development and dispersal; whereas Class II form highly ordered films at water-air interfaces through intermolecular interactions but contribute nothing to the rodlet structure. Hyd1E contributes to certain cell wall-related features, such as hydrophobicity but is not involved in cell wall-related events during fungal proliferation in host hemocoel. Does not contribute to conidial hydrophobicity. The polypeptide is Class I hydrophobin E (Beauveria bassiana (strain ARSEF 2860) (White muscardine disease fungus)).